We begin with the raw amino-acid sequence, 260 residues long: Isoprenyl transferase (260 aa).

D38 is an active-site residue. Mg(2+) is bound at residue D38. Substrate contacts are provided by residues 39–42, W43, R51, H55, and 83–85; these read GNGR and STE. N86 functions as the Proton acceptor in the catalytic mechanism. Residues W87, R89, R206, and 212–214 contribute to the substrate site; that span reads RLS. Residue E225 participates in Mg(2+) binding.

This sequence belongs to the UPP synthase family. Homodimer. The cofactor is Mg(2+).

Catalyzes the condensation of isopentenyl diphosphate (IPP) with allylic pyrophosphates generating different type of terpenoids. This is Isoprenyl transferase from Heliobacterium mobile (Heliobacillus mobilis).